The chain runs to 180 residues: Large ribosomal subunit protein uL5 (180 aa).

Belongs to the universal ribosomal protein uL5 family. Part of the 50S ribosomal subunit; part of the 5S rRNA/L5/L18/L25 subcomplex. Contacts the 5S rRNA and the P site tRNA. Forms a bridge to the 30S subunit in the 70S ribosome.

In terms of biological role, this is one of the proteins that bind and probably mediate the attachment of the 5S RNA into the large ribosomal subunit, where it forms part of the central protuberance. In the 70S ribosome it contacts protein S13 of the 30S subunit (bridge B1b), connecting the 2 subunits; this bridge is implicated in subunit movement. Contacts the P site tRNA; the 5S rRNA and some of its associated proteins might help stabilize positioning of ribosome-bound tRNAs. The polypeptide is Large ribosomal subunit protein uL5 (Brevibacillus brevis (strain 47 / JCM 6285 / NBRC 100599)).